We begin with the raw amino-acid sequence, 350 residues long: MGVTALRELIPSKCKKTLELKSLSNKSVALDAYNTLYQFLAAIRGEDGRPLMDSKGRVTSHLSGLFYRTINMLENGIKVAYVFDGAPPKLKTREIERRQKLKQEAEKKYEEAVRRGDVEEARKYAQMSAKLTKEMVEEAKRLLEAMGVPWVQAPSEGEAQAAYMAAKGDVWASASQDYDSLLFGSPRLVRNLAVSGRRKLPNKNVYVEVKPEEITLKCVLEELGITREQLVAIAVLIGTDYTPGVKGVGPKTALRYVKSYGDLERVLTALGVDDKELYLEAYNFFLNPQVTDDYELVWRRPDPQKIIEILVYEHDFNEERVRKAIERLMKAWKEKLSTKQSTLDMFFKKR.

The interval 1–102 is N-domain; the sequence is MGVTALRELI…REIERRQKLK (102 aa). Residues aspartate 31, aspartate 84, glutamate 156, glutamate 158, aspartate 177, aspartate 179, and aspartate 240 each coordinate Mg(2+). Residues 120-261 form an I-domain region; the sequence is EARKYAQMSA…TALRYVKSYG (142 aa). Residues 339–347 are interaction with PCNA; that stretch reads KQSTLDMFF.

It belongs to the XPG/RAD2 endonuclease family. FEN1 subfamily. In terms of assembly, interacts with PCNA. PCNA stimulates the nuclease activity without altering cleavage specificity. Mg(2+) is required as a cofactor.

Functionally, structure-specific nuclease with 5'-flap endonuclease and 5'-3' exonuclease activities involved in DNA replication and repair. During DNA replication, cleaves the 5'-overhanging flap structure that is generated by displacement synthesis when DNA polymerase encounters the 5'-end of a downstream Okazaki fragment. Binds the unpaired 3'-DNA end and kinks the DNA to facilitate 5' cleavage specificity. Cleaves one nucleotide into the double-stranded DNA from the junction in flap DNA, leaving a nick for ligation. Also involved in the base excision repair (BER) pathway. Acts as a genome stabilization factor that prevents flaps from equilibrating into structures that lead to duplications and deletions. Also possesses 5'-3' exonuclease activity on nicked or gapped double-stranded DNA. This is Flap endonuclease 1 from Ignicoccus hospitalis (strain KIN4/I / DSM 18386 / JCM 14125).